We begin with the raw amino-acid sequence, 43 residues long: Potassium channel toxin gamma-KTx 4.8 (43 aa).

Cystine bridges form between C5–C23, C11–C34, C20–C39, and C24–C41.

Belongs to the ergtoxin family. Gamma-KTx 4 subfamily. Expressed by the venom gland.

Its subcellular location is the secreted. Its function is as follows. Reversibly blocks Kv11/ERG potassium channels. The chain is Potassium channel toxin gamma-KTx 4.8 from Centruroides elegans (Bark scorpion).